The following is a 335-amino-acid chain: Holliday junction branch migration complex subunit RuvB (335 aa).

Residues 4 to 184 are large ATPase domain (RuvB-L); it reads VDRIVSANAK…FGIVQRLEFY (181 aa). ATP contacts are provided by residues Ile-23, Arg-24, Gly-65, Lys-68, Thr-69, Thr-70, 131-133, Arg-174, Tyr-184, and Arg-221; that span reads EDY. Residue Thr-69 participates in Mg(2+) binding. The small ATPAse domain (RuvB-S) stretch occupies residues 185–255; the sequence is SVEDLASIVT…IAQEALKMLD (71 aa). The tract at residues 258-335 is head domain (RuvB-H); sequence LAGFDFMDRK…RHFGLEQIEK (78 aa). DNA is bound by residues Arg-294, Arg-313, and Arg-318.

It belongs to the RuvB family. As to quaternary structure, homohexamer. Forms an RuvA(8)-RuvB(12)-Holliday junction (HJ) complex. HJ DNA is sandwiched between 2 RuvA tetramers; dsDNA enters through RuvA and exits via RuvB. An RuvB hexamer assembles on each DNA strand where it exits the tetramer. Each RuvB hexamer is contacted by two RuvA subunits (via domain III) on 2 adjacent RuvB subunits; this complex drives branch migration. In the full resolvosome a probable DNA-RuvA(4)-RuvB(12)-RuvC(2) complex forms which resolves the HJ.

The protein resides in the cytoplasm. The enzyme catalyses ATP + H2O = ADP + phosphate + H(+). The RuvA-RuvB-RuvC complex processes Holliday junction (HJ) DNA during genetic recombination and DNA repair, while the RuvA-RuvB complex plays an important role in the rescue of blocked DNA replication forks via replication fork reversal (RFR). RuvA specifically binds to HJ cruciform DNA, conferring on it an open structure. The RuvB hexamer acts as an ATP-dependent pump, pulling dsDNA into and through the RuvAB complex. RuvB forms 2 homohexamers on either side of HJ DNA bound by 1 or 2 RuvA tetramers; 4 subunits per hexamer contact DNA at a time. Coordinated motions by a converter formed by DNA-disengaged RuvB subunits stimulates ATP hydrolysis and nucleotide exchange. Immobilization of the converter enables RuvB to convert the ATP-contained energy into a lever motion, pulling 2 nucleotides of DNA out of the RuvA tetramer per ATP hydrolyzed, thus driving DNA branch migration. The RuvB motors rotate together with the DNA substrate, which together with the progressing nucleotide cycle form the mechanistic basis for DNA recombination by continuous HJ branch migration. Branch migration allows RuvC to scan DNA until it finds its consensus sequence, where it cleaves and resolves cruciform DNA. The protein is Holliday junction branch migration complex subunit RuvB of Histophilus somni (strain 129Pt) (Haemophilus somnus).